The primary structure comprises 438 residues: (S)-3,5-dihydroxyphenylglycine transaminase (438 aa).

At lysine 266 the chain carries N6-(pyridoxal phosphate)lysine.

This sequence belongs to the class-I pyridoxal-phosphate-dependent aminotransferase family. Pyridoxal 5'-phosphate is required as a cofactor.

It catalyses the reaction (S)-3,5-dihydroxyphenylglycine + 2-oxoglutarate = 2-(3,5-dihydroxyphenyl)-2-oxoacetate + L-glutamate. Its pathway is antibiotic biosynthesis; vancomycin biosynthesis. Catalyzes the transamination of p-hydroxybenzoylformate to L-p-hydroxyphenylglycine as part of the biosynthesis of the (S)-3,5-dihydroxyphenylglycine constituent of the glycopeptide antibiotic chloroeremomycin, a member of the vancomycin group of antibiotics. This is (S)-3,5-dihydroxyphenylglycine transaminase (hpgT) from Amycolatopsis orientalis (Nocardia orientalis).